We begin with the raw amino-acid sequence, 312 residues long: tRNA dimethylallyltransferase (312 aa).

11-18 (GPTAVGKT) is an ATP binding site. 13 to 18 (TAVGKT) is a substrate binding site. An interaction with substrate tRNA region spans residues 159 to 163 (QRVLR).

The protein belongs to the IPP transferase family. Monomer. Mg(2+) is required as a cofactor.

It carries out the reaction adenosine(37) in tRNA + dimethylallyl diphosphate = N(6)-dimethylallyladenosine(37) in tRNA + diphosphate. Functionally, catalyzes the transfer of a dimethylallyl group onto the adenine at position 37 in tRNAs that read codons beginning with uridine, leading to the formation of N6-(dimethylallyl)adenosine (i(6)A). The sequence is that of tRNA dimethylallyltransferase from Macrococcus caseolyticus (strain JCSC5402) (Macrococcoides caseolyticum).